A 366-amino-acid polypeptide reads, in one-letter code: Histidinol-phosphate aminotransferase 2 (366 aa).

A compositionally biased stretch (polar residues) spans 1 to 11; that stretch reads MQVKDQLSSLQ. The disordered stretch occupies residues 1-21; it reads MQVKDQLSSLQPYKPGKSPEQ. The residue at position 222 (Lys-222) is an N6-(pyridoxal phosphate)lysine.

It belongs to the class-II pyridoxal-phosphate-dependent aminotransferase family. Histidinol-phosphate aminotransferase subfamily. In terms of assembly, homodimer. Pyridoxal 5'-phosphate is required as a cofactor.

It catalyses the reaction L-histidinol phosphate + 2-oxoglutarate = 3-(imidazol-4-yl)-2-oxopropyl phosphate + L-glutamate. The protein operates within amino-acid biosynthesis; L-histidine biosynthesis; L-histidine from 5-phospho-alpha-D-ribose 1-diphosphate: step 7/9. The sequence is that of Histidinol-phosphate aminotransferase 2 (hisC2) from Bacillus anthracis.